We begin with the raw amino-acid sequence, 345 residues long: uncharacterized protein (345 aa).

2 helical membrane-spanning segments follow: residues 23 to 43 and 56 to 76; these read VVGF…YSYV and FLIA…FVAL. Positions 326-345 are disordered; sequence VTEPTTNSKRKPVKAKKAKK. A compositionally biased stretch (basic residues) spans 333–345; that stretch reads SKRKPVKAKKAKK.

The protein localises to the cell membrane. This is an uncharacterized protein from Mycoplasma pneumoniae (strain ATCC 29342 / M129 / Subtype 1) (Mycoplasmoides pneumoniae).